Consider the following 294-residue polypeptide: Pyridoxal 5'-phosphate synthase subunit PdxS (294 aa).

A D-ribose 5-phosphate-binding site is contributed by D24. K81 (schiff-base intermediate with D-ribose 5-phosphate) is an active-site residue. Position 153 (G153) interacts with D-ribose 5-phosphate. Residue R165 coordinates D-glyceraldehyde 3-phosphate. D-ribose 5-phosphate-binding positions include G214 and 235-236; that span reads GS.

The protein belongs to the PdxS/SNZ family. In terms of assembly, in the presence of PdxT, forms a dodecamer of heterodimers.

The catalysed reaction is aldehydo-D-ribose 5-phosphate + D-glyceraldehyde 3-phosphate + L-glutamine = pyridoxal 5'-phosphate + L-glutamate + phosphate + 3 H2O + H(+). It functions in the pathway cofactor biosynthesis; pyridoxal 5'-phosphate biosynthesis. Functionally, catalyzes the formation of pyridoxal 5'-phosphate from ribose 5-phosphate (RBP), glyceraldehyde 3-phosphate (G3P) and ammonia. The ammonia is provided by the PdxT subunit. Can also use ribulose 5-phosphate and dihydroxyacetone phosphate as substrates, resulting from enzyme-catalyzed isomerization of RBP and G3P, respectively. This Geobacillus thermodenitrificans (strain NG80-2) protein is Pyridoxal 5'-phosphate synthase subunit PdxS.